A 371-amino-acid polypeptide reads, in one-letter code: Otolith matrix protein 1 (371 aa).

A signal peptide spans 1 to 21 (MDLPGGHLAVVLFLFVLVSMS). One can recognise a Transferrin-like domain in the interval 27–367 (IRWCTVSDAE…YTTILRAFEC (341 aa)).

In terms of assembly, interacts with OTOL1.

Its subcellular location is the secreted. Its function is as follows. Required for normal otolith growth and deposition of otolin-1 in the otolith. This chain is Otolith matrix protein 1 (otomp), found in Danio rerio (Zebrafish).